A 792-amino-acid polypeptide reads, in one-letter code: RNA-binding protein RRM4 (792 aa).

Positions 37–60 are disordered; the sequence is TDSTAQASHAAEQTIDAHQQAGDV. RRM domains are found at residues 72 to 145, 154 to 235, and 321 to 398; these read PLLY…QDAS, KPRL…IDTA, and CNLF…LHEP. Residues 412 to 424 are compositionally biased toward low complexity; it reads AANADNSDMSSNS. Disordered regions lie at residues 412 to 438 and 630 to 649; these read AANADNSDMSSNSPPTEARKADKRQSR and DESGEDLSPPRASSGSAPVP. Residues 640–649 are compositionally biased toward polar residues; the sequence is RASSGSAPVP. A PABC domain is found at 715 to 792; sequence ATDDFIDSLQ…QHKVAAGLNK (78 aa).

This sequence belongs to the polyadenylate-binding protein type-1 family. As to quaternary structure, part of large ribonucleoprotein complexes (mRNPs) containing RNA-binding proteins RRM4 and PAB1, endosome-binding protein UPA1, core scaffold protein UPA2 and associated factor GRP1. Interacts (via PABC domain) with UPA1 (via PAM2 domain).

Its subcellular location is the cytoplasm. It is found in the cytoskeleton. The protein localises to the endosome. In terms of biological role, key RNA-binding protein involved in the formation of polar-growing hyphae which is essential for infection by the plant pathogen. During filamentation, assembles into particles that shuttle bidirectionally along microtubules to both poles. The RRM4 transport particles are part of the endosomal mRNP transport that regulates polarity of the infectious hyphae by transporting distinct mRNAs encoding, for example, the ubiquitin fusion protein UBI1, the small G protein RHO3, or the septin CDC3, from the nucleus to cell poles. Recognizes a broad spectrum of cargo mRNAs and precisely binds at stop codons, which constitute landmark sites of translation, suggesting an intimate connection of mRNA transport and translation. Also binds to the specific binding motif UAUG of cargo mRNAs via its third RRM. Plus-end-directed KIN3, a kinesin-3 type motor, mediates anterograde transport of RRM4-containing mRNPs whereas split dynein DYM1-DYN2 functions in retrograde movement of mRNPs. In Mycosarcoma maydis (Corn smut fungus), this protein is RNA-binding protein RRM4.